Here is a 384-residue protein sequence, read N- to C-terminus: tRNA(Met) cytidine acetate ligase (384 aa).

Residues 7 to 20, G101, N153, and R178 contribute to the ATP site; that span reads VAEY…HEFL.

The protein belongs to the TmcAL family.

It localises to the cytoplasm. The catalysed reaction is cytidine(34) in elongator tRNA(Met) + acetate + ATP = N(4)-acetylcytidine(34) in elongator tRNA(Met) + AMP + diphosphate. In terms of biological role, catalyzes the formation of N(4)-acetylcytidine (ac(4)C) at the wobble position of elongator tRNA(Met), using acetate and ATP as substrates. First activates an acetate ion to form acetyladenylate (Ac-AMP) and then transfers the acetyl group to tRNA to form ac(4)C34. This is tRNA(Met) cytidine acetate ligase from Lactobacillus delbrueckii subsp. bulgaricus (strain ATCC BAA-365 / Lb-18).